A 330-amino-acid chain; its full sequence is Diacylglycerol acyltransferase/mycolyltransferase Ag85A (330 aa).

The N-terminal stretch at 1-42 (MKFVDRFRGAVAGMLRRLVVEAMGVALLSALIGVVGSAPAEA) is a signal peptide. 84–85 (LR) is a binding site for substrate. Residues 100–110 (FEWYYQSGISV) are fibronectin-binding. A disulfide bridge connects residues Cys-129 and Cys-134. The substrate site is built by Ser-168 and Asp-196. Catalysis depends on Ser-168, which acts as the Nucleophile. Residue Glu-272 is part of the active site. Substrate is bound by residues 274–277 (LVRT), Lys-281, and 304–306 (HSW). Residue His-304 is part of the active site.

It belongs to the mycobacterial A85 antigen family. Homodimer.

It localises to the secreted. It is found in the cell wall. The protein localises to the cytoplasm. The enzyme catalyses an acyl-CoA + a 1,2-diacyl-sn-glycerol = a triacyl-sn-glycerol + CoA. It catalyses the reaction 2 alpha,alpha'-trehalose 6-mycolate = alpha,alpha'-trehalose 6,6'-bismycolate + alpha,alpha-trehalose. In terms of biological role, the antigen 85 proteins (FbpA, FbpB, FbpC) are responsible for the high affinity of mycobacteria for fibronectin, a large adhesive glycoprotein, which facilitates the attachment of M.tuberculosis to murine alveolar macrophages (AMs). They also help to maintain the integrity of the cell wall by catalyzing the transfer of mycolic acids to cell wall arabinogalactan, and through the synthesis of alpha,alpha-trehalose dimycolate (TDM, cord factor). They catalyze the transfer of a mycoloyl residue from one molecule of alpha,alpha-trehalose monomycolate (TMM) to another TMM, leading to the formation of TDM. FbpA mediates triacylglycerol (TAG) formation with long-chain acyl-CoA as the acyl donor and 1,2-dipalmitoyl-sn-glycerol (1,2-dipalmitin) as the acyl acceptor. It has a preference for C26:0-CoA over C18:1-CoA. This is Diacylglycerol acyltransferase/mycolyltransferase Ag85A (fbpA) from Mycobacterium leprae (strain TN).